A 7524-amino-acid chain; its full sequence is Mucin-19 (7524 aa).

The first 20 residues, 1 to 20 (MKLILLYLAVVLCFVGKGAA), serve as a signal peptide directing secretion. Positions 20–47 (ARSPTTTRTPTPSTSEKASHVPEATPTY) are disordered. Positions 21–34 (RSPTTTRTPTPSTS) are enriched in low complexity. The VWFD 1 domain occupies 55 to 225 (GEATMWGKDK…VCEDGVQYCD (171 aa)). Residues Cys79 and Cys224 are joined by a disulfide bond. The 56-residue stretch at 298 to 353 (CPGKHIYKECGPSNPPTCSNVAPFQDSECVSGCTCPEGYLLDDIGEKGKCVLKEKC) folds into the TIL domain. VWFD domains lie at 392–568 (GICK…EGSP) and 851–1025 (STCH…QECS). 6 cysteine pairs are disulfide-bonded: Cys394–Cys529, Cys434–Cys442, Cys853–Cys989, Cys875–Cys1024, Cys884–Cys986, and Cys900–Cys907. Residues 1244–1261 (AAATRASSSTSGSVETSV) are compositionally biased toward low complexity. 2 disordered regions span residues 1244 to 7217 (AAAT…SSLA) and 7249 to 7297 (SVIK…CPDS). Residues 1262–1289 (PATTSTSKAQAHITTASSTETSALNSTA) are compositionally biased toward polar residues. Composition is skewed to low complexity over residues 1320–7099 (PAVS…AGSG) and 7112–7217 (STSG…SSLA). A run of 36 repeats spans residues 1321–1483 (AVST…TTGP), 1484–1646 (AVST…TTGP), 1647–1809 (AVST…TTGP), 1810–1972 (AVST…TTGP), 1973–2135 (AVST…TTGP), 2136–2298 (AVST…TTGP), 2299–2461 (AVST…TTGP), 2462–2624 (AVST…TTGP), 2625–2787 (AVST…TTGP), 2788–2950 (AVST…TTGP), 2951–3113 (AVST…TTGP), 3114–3276 (AVST…TTGP), 3277–3439 (AVST…TTGP), 3440–3602 (AVST…TTGP), 3603–3765 (AVST…TTGP), 3766–3928 (AVST…TTGP), 3929–4091 (AVST…TTGP), 4092–4254 (AVST…TTGP), 4255–4417 (AVST…TTGP), 4418–4580 (AVST…TTGP), 4581–4743 (AVST…TTGP), 4744–4906 (AVST…TTGP), 4907–5069 (AVST…TTGP), 5070–5232 (AVST…TTGP), 5233–5395 (AVST…TTGP), 5396–5558 (AVST…TTGP), 5559–5721 (AVST…TTGP), 5722–5884 (AVST…TTGP), 5885–6047 (AVST…TTGP), 6048–6210 (AVST…TTGP), 6211–6373 (AVST…TTGP), 6374–6536 (AVST…TTGP), 6537–6699 (AVST…TTGP), 6700–6862 (AVST…TTGP), 6863–7025 (AVST…TTGP), and 7026–7188 (AVST…TTGP). The approximate repeats stretch occupies residues 1321-7188 (AVSTTSAGST…AETAGSTTGP (5868 aa)). Residues 7261–7291 (AKSNETTGRTTSMPASTSVAPGVTTSPNISQ) are compositionally biased toward polar residues. VWFC domains are found at residues 7302–7368 (PVCH…GHCE) and 7370–7432 (RTCL…YKCK). Cystine bridges form between Cys7435/Cys7482, Cys7449/Cys7496, Cys7458/Cys7512, and Cys7462/Cys7514. Positions 7435-7519 (CRTTPVNVTV…TTCSCRDQCE (85 aa)) constitute a CTCK domain.

Specifically expressed in sublingual salivary glands. Expressed by mucous cells of the submandibular gland and submucosal gland of the trachea. Expression is altered in sld (sublingual gland differentiation arrest) mutants.

The protein localises to the secreted. May function in ocular mucus homeostasis. The sequence is that of Mucin-19 (Muc19) from Mus musculus (Mouse).